Consider the following 625-residue polypeptide: Probable receptor-like protein kinase At1g11050 (625 aa).

Positions 1–20 (MPNSILFLLLSFLYLTNCVA) are cleaved as a signal peptide. At 21 to 227 (QSPSQTCPLD…PLNSKKKRHT (207 aa)) the chain is on the extracellular side. 4 N-linked (GlcNAc...) asparagine glycosylation sites follow: N40, N106, N121, and N177. The chain crosses the membrane as a helical span at residues 228 to 248 (VALALGITGAIFGALVIAGLI). Residues 249-625 (CLYFRFGKAV…LQIHSGDMLR (377 aa)) are Cytoplasmic-facing. In terms of domain architecture, Protein kinase spans 295-555 (FSQKNFIGRG…NPKGIMERFL (261 aa)). Residues 301–309 (IGRGGFGFV) and K323 each bind ATP. D426 functions as the Proton acceptor in the catalytic mechanism.

This sequence belongs to the protein kinase superfamily. Ser/Thr protein kinase family.

The protein localises to the membrane. The catalysed reaction is L-seryl-[protein] + ATP = O-phospho-L-seryl-[protein] + ADP + H(+). It catalyses the reaction L-threonyl-[protein] + ATP = O-phospho-L-threonyl-[protein] + ADP + H(+). This Arabidopsis thaliana (Mouse-ear cress) protein is Probable receptor-like protein kinase At1g11050.